The chain runs to 104 residues: Chitin-binding protein 2 (104 aa).

As to quaternary structure, oligomer in an unreduced state. Glycosylated.

Chitin-binding protein. Has antifungal activity against C.krusei, C.albicans, C.tropicalis and C.parapsilosis. Inhibits C.albicans by increasing cell membrane permeability and production of reactive oxygen species. Has no hemagglutinating activity. This is Chitin-binding protein 2 from Moringa oleifera (Horseradish tree).